Reading from the N-terminus, the 228-residue chain is Cytidylate kinase (228 aa).

10–18 (GPSGSGKGT) provides a ligand contact to ATP.

Belongs to the cytidylate kinase family. Type 1 subfamily.

Its subcellular location is the cytoplasm. The enzyme catalyses CMP + ATP = CDP + ADP. It catalyses the reaction dCMP + ATP = dCDP + ADP. The sequence is that of Cytidylate kinase from Acinetobacter baumannii (strain AB0057).